Here is a 243-residue protein sequence, read N- to C-terminus: MLCPPDVAFEKRHFKRRDGNKVVPPSIALVAGLESGFLFKLSAVEDVARRGQFPGLLTEDGFLLMCEESEHIRDAYAMAKHLVALAPDGIFTRATLQEAAGKVGSTQDTLSVEEVDALFNALDSDNRGYVSVDEFMDALYGEEGREAMREIRREYMRRKIEVEGEPSWRMRPTPKPTRKLRQKRKREQGQKRKQGQRQKQEQGQRQKREQGQRQKQEQGQKRKRERGGAQRPPPPKQKAGCGC.

In terms of domain architecture, EF-hand spans 110-145 (LSVEEVDALFNALDSDNRGYVSVDEFMDALYGEEGR). Residues 166 to 243 (PSWRMRPTPK…PPKQKAGCGC (78 aa)) are disordered. Residues 176 to 196 (PTRKLRQKRKREQGQKRKQGQ) show a composition bias toward basic residues. 6 tandem repeats follow at residues 181–188 (RQKRKREQ), 189–196 (GQKRKQGQ), 197–204 (RQKQEQGQ), 205–212 (RQKREQGQ), 213–220 (RQKQEQGQ), and 221–228 (KRKRERGG). Residues 181 to 228 (RQKRKREQGQKRKQGQRQKQEQGQRQKREQGQRQKQEQGQKRKRERGG) are 6 X 8 AA tandem repeats. Positions 198–220 (QKQEQGQRQKREQGQRQKQEQGQ) are enriched in basic and acidic residues.

It localises to the cytoplasm. Its subcellular location is the cytoskeleton. Its function is as follows. Microtubule-associated protein that may be involved in cross-linking microtubules. The sequence is that of I/6 autoantigen from Trypanosoma brucei brucei.